Consider the following 107-residue polypeptide: Ferredoxin 1 (107 aa).

2 consecutive 4Fe-4S ferredoxin-type domains span residues Thr2–Pro30 and Asn31–Glu60. [3Fe-4S] cluster-binding residues include Cys9 and Cys17. [4Fe-4S] cluster is bound by residues Cys21, Cys40, Cys43, and Cys46. Residue Cys50 participates in [3Fe-4S] cluster binding.

It depends on [4Fe-4S] cluster as a cofactor. [3Fe-4S] cluster is required as a cofactor.

Ferredoxins are iron-sulfur proteins that transfer electrons in a wide variety of metabolic reactions. This chain is Ferredoxin 1, found in Stutzerimonas stutzeri (Pseudomonas stutzeri).